Here is a 483-residue protein sequence, read N- to C-terminus: Aspartyl/glutamyl-tRNA(Asn/Gln) amidotransferase subunit B (483 aa).

It belongs to the GatB/GatE family. GatB subfamily. Heterotrimer of A, B and C subunits.

The catalysed reaction is L-glutamyl-tRNA(Gln) + L-glutamine + ATP + H2O = L-glutaminyl-tRNA(Gln) + L-glutamate + ADP + phosphate + H(+). It catalyses the reaction L-aspartyl-tRNA(Asn) + L-glutamine + ATP + H2O = L-asparaginyl-tRNA(Asn) + L-glutamate + ADP + phosphate + 2 H(+). Functionally, allows the formation of correctly charged Asn-tRNA(Asn) or Gln-tRNA(Gln) through the transamidation of misacylated Asp-tRNA(Asn) or Glu-tRNA(Gln) in organisms which lack either or both of asparaginyl-tRNA or glutaminyl-tRNA synthetases. The reaction takes place in the presence of glutamine and ATP through an activated phospho-Asp-tRNA(Asn) or phospho-Glu-tRNA(Gln). This is Aspartyl/glutamyl-tRNA(Asn/Gln) amidotransferase subunit B from Rickettsia canadensis (strain McKiel).